Here is a 91-residue protein sequence, read N- to C-terminus: Small ribosomal subunit protein uS19 (91 aa).

It belongs to the universal ribosomal protein uS19 family.

Functionally, protein S19 forms a complex with S13 that binds strongly to the 16S ribosomal RNA. This is Small ribosomal subunit protein uS19 from Pseudomonas fluorescens (strain SBW25).